The primary structure comprises 128 residues: EPIDERMAL PATTERNING FACTOR-like protein 2 (128 aa).

The first 28 residues, 1 to 28, serve as a signal peptide directing secretion; that stretch reads MVWSSNMSSFLLILLILNSTHFSLMANG. Cystine bridges form between cysteine 60–cysteine 119, cysteine 65–cysteine 71, and cysteine 68–cysteine 121. Residues 79–90 show a composition bias toward polar residues; that stretch reads NPQTKLHSPLTT. The tract at residues 79–100 is disordered; it reads NPQTKLHSPLTTSSSSSSETIH.

This sequence belongs to the plant cysteine rich small secretory peptide family. Epidermal patterning factor subfamily.

It localises to the secreted. Controls stomatal patterning. This Arabidopsis thaliana (Mouse-ear cress) protein is EPIDERMAL PATTERNING FACTOR-like protein 2.